We begin with the raw amino-acid sequence, 395 residues long: Calsequestrin-1 (395 aa).

The signal sequence occupies residues 1–28 (MNAADRMGARVALLLLLVLGSPQSGVHG). At Y37 the chain carries Phosphotyrosine. Residue S75 is modified to Phosphoserine. Phosphothreonine is present on T118. S210 is subject to Phosphoserine. An N-linked (GlcNAc...) asparagine glycan is attached at N344. The interval 376–395 (EGEINTEDDDDEDDDDDDDD) is disordered.

Belongs to the calsequestrin family. In terms of assembly, monomer; increases in response to a depletion of intracellular calcium. Homodimer. Homotetramer and homopolymer. Can form linear homooligomers. Ca(2+) ions promote oligomerization. Interacts (via C-terminal end and preferentially with the monomeric form) with STIM1; this interaction increases in response to a depletion of intracellular calcium, decreases both STIM1 aggregation and clustering, interaction of STIM1 with ORAI1 and store-operated Ca(2+) entry (SOCE) activity. Interacts with ASPH and TRDN. In terms of processing, N-glycosylated. Detected in skeletal muscle (at protein level). Detected in skeletal muscle.

It localises to the endoplasmic reticulum. The protein localises to the sarcoplasmic reticulum. It is found in the sarcoplasmic reticulum lumen. Its subcellular location is the mitochondrion matrix. The protein resides in the sarcoplasmic reticulum membrane. Calsequestrin is a high-capacity, moderate affinity, calcium-binding protein and thus acts as an internal calcium store in muscle. Calcium ions are bound by clusters of acidic residues at the protein surface, often at the interface between subunits. Can bind around 80 Ca(2+) ions. Regulates the release of lumenal Ca(2+) via the calcium release channel RYR1; this plays an important role in triggering muscle contraction. Negatively regulates store-operated Ca(2+) entry (SOCE) activity. This is Calsequestrin-1 (CASQ1) from Oryctolagus cuniculus (Rabbit).